Consider the following 270-residue polypeptide: Protein-ADP-ribose hydrolase (270 aa).

Positions 73 to 267 (VSVKDCQKTN…LYDTYLQKEN (195 aa)) constitute a Macro domain. Asp-92, Ile-93, and Asn-106 together coordinate ADP-D-ribose. Zn(2+) contacts are provided by Cys-112, His-117, and Cys-119. The ADP-D-ribose site is built by Cys-119, Ile-120, Asp-121, Ser-212, Thr-213, Gly-214, Glu-215, and Phe-216.

It belongs to the MacroD-type family. Zn-Macro subfamily. It depends on Zn(2+) as a cofactor.

It carries out the reaction 4-O-(ADP-D-ribosyl)-L-aspartyl-[protein] + H2O = L-aspartyl-[protein] + ADP-D-ribose + H(+). Functionally, ADP-ribosylhydrolase that specifically reverses the SirTM-mediated mono-ADP-ribosylation at an asparatate residue of GcvH-L, by releasing ADP-ribose from the target protein. May play a role in the regulation of the response to host-induced oxidative stress. The polypeptide is Protein-ADP-ribose hydrolase (Streptococcus pyogenes serotype M6 (strain ATCC BAA-946 / MGAS10394)).